Here is a 322-residue protein sequence, read N- to C-terminus: Replication factor C small subunit (322 aa).

ATP is bound at residue 50–57 (GPAGTGKT).

The protein belongs to the activator 1 small subunits family. RfcS subfamily. Heteromultimer composed of small subunits (RfcS) and large subunits (RfcL).

Functionally, part of the RFC clamp loader complex which loads the PCNA sliding clamp onto DNA. In Halobacterium salinarum (strain ATCC 700922 / JCM 11081 / NRC-1) (Halobacterium halobium), this protein is Replication factor C small subunit.